The following is a 281-amino-acid chain: Protein DOG1-like 1 (281 aa).

The DOG1 domain maps to 9–265 (EKLQQDCYNE…HEWGKSREHR (257 aa)). The disordered stretch occupies residues 262–281 (REHRRLEASGGDSGGNVTRE).

This Arabidopsis thaliana (Mouse-ear cress) protein is Protein DOG1-like 1.